Reading from the N-terminus, the 901-residue chain is Inner capsid protein VP3 (901 aa).

Belongs to the turreted BTV-fold inner capsid family. Homodecamer; each decamer is made up of two conformers of VP2, called VP2A and VP2B. 12 homodecamers assemble to form an icosahedral capsid.

The protein resides in the virion. In terms of biological role, inner capsid protein that self-assembles to form an icosahedral capsid with a T=2 symmetry, which consists of 120 copies of VP2, with channels at each of its five-fold vertices. This capsid constitutes the innermost concentric layer of the viral mature particle. The chain is Inner capsid protein VP3 (Segment-3) from Bluetongue virus 13 (isolate USA) (BTV 13).